A 274-amino-acid polypeptide reads, in one-letter code: Thiazole synthase (274 aa).

Catalysis depends on lysine 111, which acts as the Schiff-base intermediate with DXP. Residues glycine 172, 198-199 (AG), and 220-221 (NS) contribute to the 1-deoxy-D-xylulose 5-phosphate site. Residues 251 to 274 (RLPERAAASPSSPTTGIIAEAKTK) are disordered.

It belongs to the ThiG family. In terms of assembly, homotetramer. Forms heterodimers with either ThiH or ThiS.

The protein localises to the cytoplasm. The catalysed reaction is [ThiS sulfur-carrier protein]-C-terminal-Gly-aminoethanethioate + 2-iminoacetate + 1-deoxy-D-xylulose 5-phosphate = [ThiS sulfur-carrier protein]-C-terminal Gly-Gly + 2-[(2R,5Z)-2-carboxy-4-methylthiazol-5(2H)-ylidene]ethyl phosphate + 2 H2O + H(+). It participates in cofactor biosynthesis; thiamine diphosphate biosynthesis. Functionally, catalyzes the rearrangement of 1-deoxy-D-xylulose 5-phosphate (DXP) to produce the thiazole phosphate moiety of thiamine. Sulfur is provided by the thiocarboxylate moiety of the carrier protein ThiS. In vitro, sulfur can be provided by H(2)S. The chain is Thiazole synthase from Prochlorococcus marinus (strain MIT 9313).